We begin with the raw amino-acid sequence, 232 residues long: 7-cyano-7-deazaguanine synthase (232 aa).

8-18 is an ATP binding site; it reads FSGGQDSTTCL. The Zn(2+) site is built by Cys-188, Cys-197, Cys-200, and Cys-203.

This sequence belongs to the QueC family. Zn(2+) is required as a cofactor.

The enzyme catalyses 7-carboxy-7-deazaguanine + NH4(+) + ATP = 7-cyano-7-deazaguanine + ADP + phosphate + H2O + H(+). Its pathway is purine metabolism; 7-cyano-7-deazaguanine biosynthesis. Catalyzes the ATP-dependent conversion of 7-carboxy-7-deazaguanine (CDG) to 7-cyano-7-deazaguanine (preQ(0)). This chain is 7-cyano-7-deazaguanine synthase, found in Buchnera aphidicola subsp. Schizaphis graminum (strain Sg).